The sequence spans 131 residues: Transcription antitermination protein NusB (131 aa).

It belongs to the NusB family.

In terms of biological role, involved in transcription antitermination. Required for transcription of ribosomal RNA (rRNA) genes. Binds specifically to the boxA antiterminator sequence of the ribosomal RNA (rrn) operons. In Bacillus subtilis (strain 168), this protein is Transcription antitermination protein NusB.